A 429-amino-acid chain; its full sequence is Ribosomal RNA small subunit methyltransferase B (429 aa).

S-adenosyl-L-methionine contacts are provided by residues 254–260 (CAAPGGK), D277, D303, and D322. C375 acts as the Nucleophile in catalysis.

Belongs to the class I-like SAM-binding methyltransferase superfamily. RsmB/NOP family.

The protein resides in the cytoplasm. The catalysed reaction is cytidine(967) in 16S rRNA + S-adenosyl-L-methionine = 5-methylcytidine(967) in 16S rRNA + S-adenosyl-L-homocysteine + H(+). In terms of biological role, specifically methylates the cytosine at position 967 (m5C967) of 16S rRNA. The polypeptide is Ribosomal RNA small subunit methyltransferase B (Shigella boydii serotype 18 (strain CDC 3083-94 / BS512)).